A 371-amino-acid chain; its full sequence is Maltose/maltodextrin import ATP-binding protein MalK (371 aa).

The ABC transporter domain occupies 4 to 234 (VQLQNVTKAW…PADRFVAGFI (231 aa)). 36-43 (GPSGCGKS) serves as a coordination point for ATP.

It belongs to the ABC transporter superfamily. Maltooligosaccharide importer (TC 3.A.1.1.1) family. In terms of assembly, the complex is composed of two ATP-binding proteins (MalK), two transmembrane proteins (MalG and MalK) and a solute-binding protein (MalE).

It is found in the cell inner membrane. The catalysed reaction is D-maltose(out) + ATP + H2O = D-maltose(in) + ADP + phosphate + H(+). Part of the ABC transporter complex MalEFGK involved in maltose/maltodextrin import. Responsible for energy coupling to the transport system. The sequence is that of Maltose/maltodextrin import ATP-binding protein MalK from Escherichia coli O6:H1 (strain CFT073 / ATCC 700928 / UPEC).